The primary structure comprises 599 residues: Pentatricopeptide repeat-containing protein At3g62540, mitochondrial (599 aa).

The N-terminal 99 residues, 1–99, are a transit peptide targeting the mitochondrion; it reads MAAAPWLYLS…RGFSSGSSNV (99 aa). PPR repeat units follow at residues 194 to 228, 230 to 262, 263 to 293, 297 to 331, 332 to 366, 367 to 401, 402 to 436, 437 to 471, 472 to 506, and 507 to 541; these read ASRT…GLLT, ETFT…KFKI, GVET…LKER, NMMT…GLKP, DIVA…GPCP, NVRS…GLQP, DAAV…GHPP, DGKT…EIEP, SIHT…GICP, and DDNS…GMKT.

Belongs to the PPR family. P subfamily.

It localises to the mitochondrion. This Arabidopsis thaliana (Mouse-ear cress) protein is Pentatricopeptide repeat-containing protein At3g62540, mitochondrial.